The primary structure comprises 214 residues: Large ribosomal subunit protein uL3 (214 aa).

The disordered stretch occupies residues threonine 134–lysine 161. An N5-methylglutamine modification is found at glutamine 151.

Belongs to the universal ribosomal protein uL3 family. Part of the 50S ribosomal subunit. Forms a cluster with proteins L14 and L19. In terms of processing, methylated by PrmB.

Functionally, one of the primary rRNA binding proteins, it binds directly near the 3'-end of the 23S rRNA, where it nucleates assembly of the 50S subunit. The sequence is that of Large ribosomal subunit protein uL3 from Teredinibacter turnerae (strain ATCC 39867 / T7901).